We begin with the raw amino-acid sequence, 457 residues long: Ribosomal protein uS12 methylthiotransferase RimO (457 aa).

The MTTase N-terminal domain maps to 30 to 140 (PTIGMVSLGC…VLDAVHGAVP (111 aa)). [4Fe-4S] cluster-binding residues include Cys39, Cys75, Cys104, Cys171, Cys175, and Cys178. The Radical SAM core domain maps to 157–386 (LTPRHFSYLK…MQKAQAISEA (230 aa)). In terms of domain architecture, TRAM spans 389-456 (AARIGQRLEV…EYDLWGRAVL (68 aa)).

This sequence belongs to the methylthiotransferase family. RimO subfamily. [4Fe-4S] cluster serves as cofactor.

It localises to the cytoplasm. It carries out the reaction L-aspartate(89)-[ribosomal protein uS12]-hydrogen + (sulfur carrier)-SH + AH2 + 2 S-adenosyl-L-methionine = 3-methylsulfanyl-L-aspartate(89)-[ribosomal protein uS12]-hydrogen + (sulfur carrier)-H + 5'-deoxyadenosine + L-methionine + A + S-adenosyl-L-homocysteine + 2 H(+). Functionally, catalyzes the methylthiolation of an aspartic acid residue of ribosomal protein uS12. In Cereibacter sphaeroides (strain ATCC 17025 / ATH 2.4.3) (Rhodobacter sphaeroides), this protein is Ribosomal protein uS12 methylthiotransferase RimO.